Here is a 287-residue protein sequence, read N- to C-terminus: IQ domain-containing protein K (287 aa).

The chain is IQ domain-containing protein K (IQCK) from Homo sapiens (Human).